The chain runs to 227 residues: 2-C-methyl-D-erythritol 4-phosphate cytidylyltransferase (227 aa).

It belongs to the IspD/TarI cytidylyltransferase family. IspD subfamily.

It catalyses the reaction 2-C-methyl-D-erythritol 4-phosphate + CTP + H(+) = 4-CDP-2-C-methyl-D-erythritol + diphosphate. It participates in isoprenoid biosynthesis; isopentenyl diphosphate biosynthesis via DXP pathway; isopentenyl diphosphate from 1-deoxy-D-xylulose 5-phosphate: step 2/6. Functionally, catalyzes the formation of 4-diphosphocytidyl-2-C-methyl-D-erythritol from CTP and 2-C-methyl-D-erythritol 4-phosphate (MEP). The polypeptide is 2-C-methyl-D-erythritol 4-phosphate cytidylyltransferase (Bordetella parapertussis (strain 12822 / ATCC BAA-587 / NCTC 13253)).